Reading from the N-terminus, the 467-residue chain is Immunoglobulin superfamily member 21 (467 aa).

Positions 1–24 (MRTAPSLRRCVCLLLAAILDLARG) are cleaved as a signal peptide. An Ig-like 1 domain is found at 25–132 (YLTVNIEPLP…RATREKVVLA (108 aa)). Cys46 and Cys116 are joined by a disulfide. 2 N-linked (GlcNAc...) asparagine glycosylation sites follow: Asn82 and Asn165. Positions 229–259 (LSLLDAENRGGRPYTERPSRGLTPDPNILLQ) are disordered. The segment covering 234 to 247 (AENRGGRPYTERPS) has biased composition (basic and acidic residues). Residues 344–429 (PKIVMTPSRA…GSTDTHTRLI (86 aa)) enclose the Ig-like 2 domain. Asn407 and Asn444 each carry an N-linked (GlcNAc...) asparagine glycan.

In terms of assembly, interacts (Ig-like 1 domain) with NRXN2 (via Laminin G-like 1 domain) in a trans-interaction manner.

Its subcellular location is the postsynaptic cell membrane. Its function is as follows. Involved in synaptic inhibition in the brain. Selectively regulates inhibitory presynaptic differentiation through interacting with presynaptic NRXN2. This chain is Immunoglobulin superfamily member 21, found in Homo sapiens (Human).